The primary structure comprises 94 residues: Co-chaperonin GroES (94 aa).

It belongs to the GroES chaperonin family. As to quaternary structure, heptamer of 7 subunits arranged in a ring. Interacts with the chaperonin GroEL.

The protein resides in the cytoplasm. Functionally, together with the chaperonin GroEL, plays an essential role in assisting protein folding. The GroEL-GroES system forms a nano-cage that allows encapsulation of the non-native substrate proteins and provides a physical environment optimized to promote and accelerate protein folding. GroES binds to the apical surface of the GroEL ring, thereby capping the opening of the GroEL channel. The protein is Co-chaperonin GroES of Ligilactobacillus salivarius (strain UCC118) (Lactobacillus salivarius).